A 424-amino-acid chain; its full sequence is UPF0229 protein YPTS_2141 (424 aa).

Positions 84–109 (TNDRVDRPQGGGGGGSGQGNAGKDGE) are disordered. A compositionally biased stretch (gly residues) spans 92 to 105 (QGGGGGGSGQGNAG).

The protein belongs to the UPF0229 family.

This Yersinia pseudotuberculosis serotype IB (strain PB1/+) protein is UPF0229 protein YPTS_2141.